Consider the following 284-residue polypeptide: D-tagatose-1,6-bisphosphate aldolase subunit GatY (284 aa).

The Proton donor role is filled by Asp-82. Zn(2+) contacts are provided by His-83 and His-180. Gly-181 is a binding site for dihydroxyacetone phosphate. His-208 serves as a coordination point for Zn(2+). Dihydroxyacetone phosphate contacts are provided by residues 209–211 (GAS) and 230–233 (NVAT).

The protein belongs to the class II fructose-bisphosphate aldolase family. TagBP aldolase GatY subfamily. As to quaternary structure, forms a complex with GatZ. Zn(2+) is required as a cofactor.

It carries out the reaction D-tagatofuranose 1,6-bisphosphate = D-glyceraldehyde 3-phosphate + dihydroxyacetone phosphate. It participates in carbohydrate metabolism; D-tagatose 6-phosphate degradation; D-glyceraldehyde 3-phosphate and glycerone phosphate from D-tagatose 6-phosphate: step 2/2. Functionally, catalytic subunit of the tagatose-1,6-bisphosphate aldolase GatYZ, which catalyzes the reversible aldol condensation of dihydroxyacetone phosphate (DHAP or glycerone-phosphate) with glyceraldehyde 3-phosphate (G3P) to produce tagatose 1,6-bisphosphate (TBP). Requires GatZ subunit for full activity and stability. Is involved in the catabolism of galactitol. This chain is D-tagatose-1,6-bisphosphate aldolase subunit GatY, found in Escherichia coli O45:K1 (strain S88 / ExPEC).